A 365-amino-acid chain; its full sequence is Putative nudix hydrolase 1 (365 aa).

The region spanning 72 to 201 (VNYVAAAIIL…DFIRLVDEAV (130 aa)) is the Nudix hydrolase domain. Residues 109 to 130 (GRVEAGETIEEAVVREVKEETG) carry the Nudix box motif. Residues E124 and E128 each contribute to the Mg(2+) site.

This sequence belongs to the Nudix hydrolase family. Mg(2+) is required as a cofactor. The cofactor is Mn(2+).

In terms of biological role, probably mediates the hydrolysis of some nucleoside diphosphate derivatives. This is Putative nudix hydrolase 1 (ndx-1) from Caenorhabditis elegans.